Consider the following 89-residue polypeptide: Small ribosomal subunit protein uS14 (89 aa).

It belongs to the universal ribosomal protein uS14 family. As to quaternary structure, part of the 30S ribosomal subunit. Contacts proteins S3 and S10.

Binds 16S rRNA, required for the assembly of 30S particles and may also be responsible for determining the conformation of the 16S rRNA at the A site. The polypeptide is Small ribosomal subunit protein uS14 (Chlorobaculum parvum (strain DSM 263 / NCIMB 8327) (Chlorobium vibrioforme subsp. thiosulfatophilum)).